Reading from the N-terminus, the 434-residue chain is [Pyruvate dehydrogenase (acetyl-transferring)] kinase isozyme 1, mitochondrial (434 aa).

A mitochondrion-targeting transit peptide spans 1-26 (MRLARLLRGGTSVRPLCAVPCASRSL). The residue at position 136 (Tyr-136) is a Phosphotyrosine; by FGFR1. Residues 161–391 (TEYKESFGVD…DAVIYIKALS (231 aa)) enclose the Histidine kinase domain. Phosphotyrosine; by FGFR1, ABL1, FLT3 and JAK2 is present on Tyr-241. Tyr-242 is subject to Phosphotyrosine; by FGFR1. ATP-binding positions include 277–284 (ELFKNAMR), Asp-316, 335–336 (ST), and 352–357 (GFGYGL). Thr-336 bears the Phosphothreonine mark. Position 403 is an N6-succinyllysine (Lys-403).

The protein belongs to the PDK/BCKDK protein kinase family. Homodimer, and heterodimer with PDK2. Interacts with the pyruvate dehydrogenase complex subunit DLAT, and is part of the multimeric pyruvate dehydrogenase complex that contains multiple copies of pyruvate dehydrogenase (E1), dihydrolipoamide acetyltransferase (DLAT, E2) and lipoamide dehydrogenase (DLD, E3). Interacts with phosphoglycerate kinase PGK1; the interaction is direct, occurs under hypoxic conditions and leads to PDK1-mediated inhibition of pyruvate dehydrogenase complex activity. Phosphorylated by constitutively activated ABL1, FGFR1, FLT3 and JAK2 (in vitro), and this may also occur in cancer cells that express constitutively activated ABL1, FGFR1, FLT3 and JAK2. Phosphorylation at Tyr-241 and Tyr-242 strongly increases kinase activity, while phosphorylation at Tyr-136 has a lesser effect. Phosphorylated under hypoxic conditions at Thr-336 by phosphoglycerate kinase PGK1 which has an activating effect. As to expression, detected in pancreas islets (at protein level). Expressed predominantly in the heart.

The protein localises to the mitochondrion matrix. The enzyme catalyses L-seryl-[pyruvate dehydrogenase E1 alpha subunit] + ATP = O-phospho-L-seryl-[pyruvate dehydrogenase E1 alpha subunit] + ADP + H(+). With respect to regulation, activated by binding to the pyruvate dehydrogenase complex subunit DLAT. Strongly activated by NADH plus acetyl-coenzyme A. Inhibited by dichloroacetate. In terms of biological role, kinase that plays a key role in regulation of glucose and fatty acid metabolism and homeostasis via phosphorylation of the pyruvate dehydrogenase subunits PDHA1 and PDHA2. This inhibits pyruvate dehydrogenase activity, and thereby regulates metabolite flux through the tricarboxylic acid cycle, down-regulates aerobic respiration and inhibits the formation of acetyl-coenzyme A from pyruvate. Plays an important role in cellular responses to hypoxia and is important for cell proliferation under hypoxia. In Rattus norvegicus (Rat), this protein is [Pyruvate dehydrogenase (acetyl-transferring)] kinase isozyme 1, mitochondrial (Pdk1).